Reading from the N-terminus, the 243-residue chain is Carboxy-S-adenosyl-L-methionine synthase (243 aa).

Residues tyrosine 40, 65–67, 90–91, 118–119, asparagine 133, and arginine 200 each bind S-adenosyl-L-methionine; these read GCS, DN, and DI.

The protein belongs to the class I-like SAM-binding methyltransferase superfamily. Cx-SAM synthase family. As to quaternary structure, homodimer.

It catalyses the reaction prephenate + S-adenosyl-L-methionine = carboxy-S-adenosyl-L-methionine + 3-phenylpyruvate + H2O. In terms of biological role, catalyzes the conversion of S-adenosyl-L-methionine (SAM) to carboxy-S-adenosyl-L-methionine (Cx-SAM). This is Carboxy-S-adenosyl-L-methionine synthase from Shewanella sp. (strain W3-18-1).